We begin with the raw amino-acid sequence, 320 residues long: Glutathione synthetase (320 aa).

The region spanning 130 to 315 (KIFISWFSRF…ITGILIDYIE (186 aa)) is the ATP-grasp domain. 156–212 (WKEKNDIILKPLDAMGGKGVFRIKKDDPNFSVIVETLTNYEKKYCMIQTYLPEVQFG) lines the ATP pocket. Mg(2+) is bound by residues E286 and N288.

The protein belongs to the prokaryotic GSH synthase family. Requires Mg(2+) as cofactor. It depends on Mn(2+) as a cofactor.

It catalyses the reaction gamma-L-glutamyl-L-cysteine + glycine + ATP = glutathione + ADP + phosphate + H(+). It functions in the pathway sulfur metabolism; glutathione biosynthesis; glutathione from L-cysteine and L-glutamate: step 2/2. The chain is Glutathione synthetase from Buchnera aphidicola subsp. Schizaphis graminum (strain Sg).